The chain runs to 1215 residues: DNA-directed RNA polymerase subunit beta' (1215 aa).

Zn(2+)-binding residues include Cys-60, Cys-62, Cys-75, and Cys-78. Mg(2+) contacts are provided by Asp-449, Asp-451, and Asp-453. Zn(2+)-binding residues include Cys-818, Cys-892, Cys-899, and Cys-902.

The protein belongs to the RNA polymerase beta' chain family. In terms of assembly, the RNAP catalytic core consists of 2 alpha, 1 beta, 1 beta' and 1 omega subunit. When a sigma factor is associated with the core the holoenzyme is formed, which can initiate transcription. Requires Mg(2+) as cofactor. The cofactor is Zn(2+).

It catalyses the reaction RNA(n) + a ribonucleoside 5'-triphosphate = RNA(n+1) + diphosphate. DNA-dependent RNA polymerase catalyzes the transcription of DNA into RNA using the four ribonucleoside triphosphates as substrates. The polypeptide is DNA-directed RNA polymerase subunit beta' (Limosilactobacillus fermentum (strain NBRC 3956 / LMG 18251) (Lactobacillus fermentum)).